Consider the following 394-residue polypeptide: Chalcone synthase 8 (394 aa).

Cys-165 is an active-site residue.

This sequence belongs to the thiolase-like superfamily. Chalcone/stilbene synthases family.

It catalyses the reaction (E)-4-coumaroyl-CoA + 3 malonyl-CoA + 3 H(+) = 2',4,4',6'-tetrahydroxychalcone + 3 CO2 + 4 CoA. It functions in the pathway secondary metabolite biosynthesis; flavonoid biosynthesis. Its function is as follows. The primary product of this enzyme is 4,2',4',6'-tetrahydroxychalcone (also termed naringenin-chalcone or chalcone) which can under specific conditions spontaneously isomerize into naringenin. The polypeptide is Chalcone synthase 8 (CHS8) (Bromheadia finlaysoniana (Orchid)).